We begin with the raw amino-acid sequence, 260 residues long: Pyridoxine 5'-phosphate synthase (260 aa).

Residue asparagine 15 participates in 3-amino-2-oxopropyl phosphate binding. 17–18 (DH) contacts 1-deoxy-D-xylulose 5-phosphate. 3-amino-2-oxopropyl phosphate is bound at residue arginine 26. Residue histidine 51 is the Proton acceptor of the active site. Residues arginine 53 and histidine 58 each contribute to the 1-deoxy-D-xylulose 5-phosphate site. Glutamate 78 functions as the Proton acceptor in the catalytic mechanism. Residue threonine 108 participates in 1-deoxy-D-xylulose 5-phosphate binding. Histidine 199 functions as the Proton donor in the catalytic mechanism. 3-amino-2-oxopropyl phosphate contacts are provided by residues glycine 200 and 221-222 (GH).

This sequence belongs to the PNP synthase family. As to quaternary structure, homooctamer; tetramer of dimers.

It is found in the cytoplasm. It carries out the reaction 3-amino-2-oxopropyl phosphate + 1-deoxy-D-xylulose 5-phosphate = pyridoxine 5'-phosphate + phosphate + 2 H2O + H(+). It functions in the pathway cofactor biosynthesis; pyridoxine 5'-phosphate biosynthesis; pyridoxine 5'-phosphate from D-erythrose 4-phosphate: step 5/5. In terms of biological role, catalyzes the complicated ring closure reaction between the two acyclic compounds 1-deoxy-D-xylulose-5-phosphate (DXP) and 3-amino-2-oxopropyl phosphate (1-amino-acetone-3-phosphate or AAP) to form pyridoxine 5'-phosphate (PNP) and inorganic phosphate. The chain is Pyridoxine 5'-phosphate synthase from Cupriavidus necator (strain ATCC 17699 / DSM 428 / KCTC 22496 / NCIMB 10442 / H16 / Stanier 337) (Ralstonia eutropha).